We begin with the raw amino-acid sequence, 273 residues long: 4-hydroxy-tetrahydrodipicolinate reductase (273 aa).

Residue 12-17 (GSGGRM) participates in NAD(+) binding. Arg39 is an NADP(+) binding site. Residues 102-104 (GTT) and 126-129 (AANF) each bind NAD(+). His159 (proton donor/acceptor) is an active-site residue. His160 contacts (S)-2,3,4,5-tetrahydrodipicolinate. Lys163 (proton donor) is an active-site residue. Position 169–170 (169–170 (GT)) interacts with (S)-2,3,4,5-tetrahydrodipicolinate.

It belongs to the DapB family. In terms of assembly, homotetramer.

Its subcellular location is the cytoplasm. It catalyses the reaction (S)-2,3,4,5-tetrahydrodipicolinate + NAD(+) + H2O = (2S,4S)-4-hydroxy-2,3,4,5-tetrahydrodipicolinate + NADH + H(+). It carries out the reaction (S)-2,3,4,5-tetrahydrodipicolinate + NADP(+) + H2O = (2S,4S)-4-hydroxy-2,3,4,5-tetrahydrodipicolinate + NADPH + H(+). Its pathway is amino-acid biosynthesis; L-lysine biosynthesis via DAP pathway; (S)-tetrahydrodipicolinate from L-aspartate: step 4/4. In terms of biological role, catalyzes the conversion of 4-hydroxy-tetrahydrodipicolinate (HTPA) to tetrahydrodipicolinate. This is 4-hydroxy-tetrahydrodipicolinate reductase from Serratia proteamaculans (strain 568).